The primary structure comprises 127 residues: Anti-adapter protein IraD (127 aa).

Belongs to the GpW/Gp25 family. IraD subfamily. In terms of assembly, interacts with RssB.

Its subcellular location is the cytoplasm. Inhibits RpoS proteolysis by regulating RssB activity, thereby increasing the stability of the sigma stress factor RpoS during oxidative stress. Its effect on RpoS stability is due to its interaction with RssB, which probably blocks the interaction of RssB with RpoS, and the consequent delivery of the RssB-RpoS complex to the ClpXP protein degradation pathway. This is Anti-adapter protein IraD from Escherichia coli (strain UTI89 / UPEC).